We begin with the raw amino-acid sequence, 396 residues long: Calcium-responsive transactivator (396 aa).

Residues 1–148 (MSVAFASARP…TLPTTSMSIS (148 aa)) are N-terminal auto-inhibitory domain; necessary for interaction with SMARCA4/BRG1. Positions 50-53 (YQQI) match the SH2-binding motif. 3 disordered regions span residues 72–162 (QSLL…SQGV), 192–280 (QAAT…GDYA), and 311–396 (SQQQ…NYQQ). Positions 90–106 (LTQSGSSQGLHSQGSLS) are enriched in low complexity. Polar residues-rich tracts occupy residues 107 to 122 (DAISTGLPPSSLLQGQ) and 128 to 147 (SHVSMQQTAPNTLPTTSMSI). Positions 149–232 (GPGYSHAGPA…GSSMMGQRPM (84 aa)) are methionine-rich intra-molecular domain. 3 stretches are compositionally biased toward low complexity: residues 199–229 (SSAQGGSQHYQGQSSIAMMGQGSQGSSMMGQ), 238–261 (SQQGSSQQYLGQEEYYGEQYSHSQ), and 311–369 (SQQQ…YGSY). Residues 246–317 (YLGQEEYYGE…SQYSQQQAGY (72 aa)) are MFD domain. The tract at residues 334 to 396 (SQQSYPGQQQ…EQGQYGNYQQ (63 aa)) is necessary for nuclear localization. The SH2-binding motif lies at 353-356 (SQYP). The SH3-binding motif lies at 371–379 (APQTAPSAQ). The segment covering 384 to 396 (YGYEQGQYGNYQQ) has biased composition (low complexity). Residues 387-396 (EQGQYGNYQQ) form a necessary for interaction with CREBBP and for the recruitment of CREBBP to the nuclear bodies region. Residues 391 to 394 (YGNY) carry the SH2-binding motif.

The protein belongs to the SS18 family. Homodimer. Dimerization may be necessary for its function in neuronal dendritic development. Interacts (via C-terminus) with CREBBP (via N-terminus), EP300 and SMARCA4/BRG1. Interacts with the nBAF complex. Association with CREBBP facilitates transcription while the association with SMARCA4/BRG1 suppresses CREST-mediated transcription in resting neurons. As to expression, ubiquitous; with lowest levels in spleen.

The protein resides in the nucleus. The protein localises to the chromosome. It localises to the centromere. Its subcellular location is the kinetochore. Functionally, transcriptional activator which is required for calcium-dependent dendritic growth and branching in cortical neurons. Recruits CREB-binding protein (CREBBP) to nuclear bodies. Component of the CREST-BRG1 complex, a multiprotein complex that regulates promoter activation by orchestrating a calcium-dependent release of a repressor complex and a recruitment of an activator complex. In resting neurons, transcription of the c-FOS promoter is inhibited by BRG1-dependent recruitment of a phospho-RB1-HDAC1 repressor complex. Upon calcium influx, RB1 is dephosphorylated by calcineurin, which leads to release of the repressor complex. At the same time, there is increased recruitment of CREBBP to the promoter by a CREST-dependent mechanism, which leads to transcriptional activation. The CREST-BRG1 complex also binds to the NR2B promoter, and activity-dependent induction of NR2B expression involves a release of HDAC1 and recruitment of CREBBP. The protein is Calcium-responsive transactivator (SS18L1) of Homo sapiens (Human).